The sequence spans 492 residues: DEAD-box ATP-dependent RNA helicase RhpA (492 aa).

A Q motif motif is present at residues 20-48 (PSFNDLGLKESVLKSVYEAGFTSPSPIQE). The 170-residue stretch at 51-220 (IPAVLQGRDV…DKILENPIKI (170 aa)) folds into the Helicase ATP-binding domain. Residue 64-71 (AQTGTGKT) participates in ATP binding. Positions 168–171 (DESD) match the DEAD box motif. The 163-residue stretch at 231-393 (DITQRFYVIN…EIPTINENQI (163 aa)) folds into the Helicase C-terminal domain. A disordered region spans residues 445 to 492 (AIQNPKEKTPKPSHKKTPQHERARSFKKGQHRDRHPKTNHHSKKPKRR). The span at 469 to 492 (SFKKGQHRDRHPKTNHHSKKPKRR) shows a compositional bias: basic residues.

Belongs to the DEAD box helicase family. In terms of assembly, homodimer. Interacts with RNase J (rnj), might be a member of a minimal RNA degradosome complex.

The protein resides in the cytoplasm. The enzyme catalyses ATP + H2O = ADP + phosphate + H(+). DEAD-box RNA helicase probably involved in RNA degradation. Unwinds dsRNA in both 5'- and 3'-directions. Background RNA-dependent ATPase activity is stimulated about 5-fold by RNaseJ (rnj). Stimulates the dsRNase activity of RNase J. This Helicobacter pylori (strain B128) protein is DEAD-box ATP-dependent RNA helicase RhpA (rhpA).